A 179-amino-acid polypeptide reads, in one-letter code: Tegument protein UL55 homolog (179 aa).

The protein belongs to the alphaherpesvirinae HHV-1 UL55 family.

The protein localises to the virion tegument. It is found in the host nucleus matrix. In Homo sapiens (Human), this protein is Tegument protein UL55 homolog.